The primary structure comprises 268 residues: 4-hydroxy-tetrahydrodipicolinate reductase (268 aa).

9–14 (GCSGRM) lines the NAD(+) pocket. Arg-36 contacts NADP(+). NAD(+)-binding positions include 98–100 (GTT) and 122–125 (APNT). His-155 (proton donor/acceptor) is an active-site residue. A (S)-2,3,4,5-tetrahydrodipicolinate-binding site is contributed by His-156. The active-site Proton donor is the Lys-159. Residue 165–166 (GT) participates in (S)-2,3,4,5-tetrahydrodipicolinate binding.

This sequence belongs to the DapB family.

It is found in the cytoplasm. The catalysed reaction is (S)-2,3,4,5-tetrahydrodipicolinate + NAD(+) + H2O = (2S,4S)-4-hydroxy-2,3,4,5-tetrahydrodipicolinate + NADH + H(+). It catalyses the reaction (S)-2,3,4,5-tetrahydrodipicolinate + NADP(+) + H2O = (2S,4S)-4-hydroxy-2,3,4,5-tetrahydrodipicolinate + NADPH + H(+). The protein operates within amino-acid biosynthesis; L-lysine biosynthesis via DAP pathway; (S)-tetrahydrodipicolinate from L-aspartate: step 4/4. Catalyzes the conversion of 4-hydroxy-tetrahydrodipicolinate (HTPA) to tetrahydrodipicolinate. The chain is 4-hydroxy-tetrahydrodipicolinate reductase from Colwellia psychrerythraea (strain 34H / ATCC BAA-681) (Vibrio psychroerythus).